The sequence spans 463 residues: MKAWHWSVTLVVIYLAIPVILYLLTRKDDRKPLSDIRKRKRTIVLVLGDLGRSPRMLYHARSLARSGHKVDLCGYDGAKPFDEILNNDLIKIHHIPLILNTRKLPFVVFGILKVIRQHWLLISLLYKLRGADYLLVQNPPSIPTLGVVRFYNLFLSTRTKVVLDWHNFGYTILALKLPETHPMVKFAKFYEGFFGGRAFVHLCVTVLMGQAMRKTFGMSGRRIVPLHDRPAFHFKPLSESEKLDVLRDFKETLYDDMTADHKIIVSSTSYTPDENFNILLDALALYDESKLDLPPLRVIITGKGPMMPEFLAKVEKLQLKRVSIRTAWLEFADYPRILGAAHLGVSLHESSSGYDLPMKVVDMFGCGIPVVSVDYAALSELVKTNTNGVAVKGHVEMGNTFMSLFSNRGKLDNIKRGAMIESRNTWDQTWVKTVGPLFDIGEYVQQRPDEDYDFSSSSSDDDH.

At 1–3 (MKA) the chain is on the lumenal side. The chain crosses the membrane as a helical span at residues 4 to 24 (WHWSVTLVVIYLAIPVILYLL). The Cytoplasmic portion of the chain corresponds to 25 to 105 (TRKDDRKPLS…PLILNTRKLP (81 aa)). Residues 106–126 (FVVFGILKVIRQHWLLISLLY) constitute an intramembrane region (helical). The Lumenal portion of the chain corresponds to 127–463 (KLRGADYLLV…FSSSSSDDDH (337 aa)).

This sequence belongs to the glycosyltransferase group 1 family.

The protein localises to the endoplasmic reticulum membrane. The catalysed reaction is an N,N'-diacetylchitobiosyl-diphospho-di-trans,poly-cis-dolichol + GDP-alpha-D-mannose = a beta-D-Man-(1-&gt;4)-beta-D-GlcNAc-(1-&gt;4)-alpha-D-GlcNAc-diphospho-di-trans,poly-cis-dolichol + GDP + H(+). It participates in protein modification; protein glycosylation. Its function is as follows. Participates in the formation of the lipid-linked precursor oligosaccharide for N-glycosylation. Involved in assembling the dolichol-pyrophosphate-GlcNAc(2)-Man(5) intermediate on the cytoplasmic surface of the ER. The protein is Chitobiosyldiphosphodolichol beta-mannosyltransferase (ALG1) of Yarrowia lipolytica (strain CLIB 122 / E 150) (Yeast).